A 430-amino-acid polypeptide reads, in one-letter code: NAD(P)(+) glycohydrolase toxin Tse6 (430 aa).

3 helical membrane passes run 17–37 (FGVA…AAVV), 46–66 (LAAV…FQIV), and 193–213 (LLLA…IGGL).

As to quaternary structure, interacts with Tsi6, VgrG1a, EagT6 and EF-Tu.

It localises to the membrane. It catalyses the reaction NAD(+) + H2O = ADP-D-ribose + nicotinamide + H(+). Its function is as follows. Type VI secretion exported toxin that acts as a glycohydrolase on bacterial target cells and degrades the essential dinucleotides NAD(+) and NADP(+), thereby inducing bacteriostasis. The activity resides in the C-terminal region that is initially neutralized by the cognate immunity protein Tsi6. The protein is NAD(P)(+) glycohydrolase toxin Tse6 of Pseudomonas aeruginosa (strain ATCC 15692 / DSM 22644 / CIP 104116 / JCM 14847 / LMG 12228 / 1C / PRS 101 / PAO1).